We begin with the raw amino-acid sequence, 274 residues long: Secreted RxLR effector protein 40 (274 aa).

The first 21 residues, 1 to 21, serve as a signal peptide directing secretion; that stretch reads MRLYTQVVAASLVATLAIVDS. A RxLR-dEER motif is present at residues 35–53; sequence RFLRQDNATVARVSEDGER. Residues asparagine 41, asparagine 74, and asparagine 258 are each glycosylated (N-linked (GlcNAc...) asparagine).

It belongs to the RxLR effector family.

The protein localises to the secreted. It is found in the host nucleus. Its subcellular location is the host cytoplasm. Its function is as follows. Secreted effector that completely suppresses the host cell death induced by cell death-inducing proteins. The polypeptide is Secreted RxLR effector protein 40 (Plasmopara viticola (Downy mildew of grapevine)).